We begin with the raw amino-acid sequence, 180 residues long: Large ribosomal subunit protein uL5 (180 aa).

This sequence belongs to the universal ribosomal protein uL5 family. Part of the 50S ribosomal subunit; part of the 5S rRNA/L5/L18/L25 subcomplex. Contacts the 5S rRNA and the P site tRNA. Forms a bridge to the 30S subunit in the 70S ribosome.

In terms of biological role, this is one of the proteins that bind and probably mediate the attachment of the 5S RNA into the large ribosomal subunit, where it forms part of the central protuberance. In the 70S ribosome it contacts protein S13 of the 30S subunit (bridge B1b), connecting the 2 subunits; this bridge is implicated in subunit movement. Contacts the P site tRNA; the 5S rRNA and some of its associated proteins might help stabilize positioning of ribosome-bound tRNAs. The protein is Large ribosomal subunit protein uL5 of Ralstonia pickettii (strain 12J).